A 61-amino-acid polypeptide reads, in one-letter code: Truncated Cytokine response-modifying protein B (61 aa).

Its function is as follows. The protein is truncated in this strain and presumably inactive. It has similarities with variola virus CrmB, but the product is inactivated due to several premature stop codon. This is Truncated Cytokine response-modifying protein B from Bos taurus (Bovine).